The following is a 372-amino-acid chain: Lipoyl synthase, mitochondrial (372 aa).

Residues 1–27 (MSLRCGGAVRTVGPRVFGRYVFSPVRE) constitute a mitochondrion transit peptide. 7 residues coordinate [4Fe-4S] cluster: cysteine 106, cysteine 111, cysteine 117, cysteine 137, cysteine 141, cysteine 144, and serine 352. The region spanning 122–341 (EYATATATIM…EKVGNELGFH (220 aa)) is the Radical SAM core domain.

Belongs to the radical SAM superfamily. Lipoyl synthase family. [4Fe-4S] cluster is required as a cofactor.

The protein resides in the mitochondrion. It catalyses the reaction [[Fe-S] cluster scaffold protein carrying a second [4Fe-4S](2+) cluster] + N(6)-octanoyl-L-lysyl-[protein] + 2 oxidized [2Fe-2S]-[ferredoxin] + 2 S-adenosyl-L-methionine + 4 H(+) = [[Fe-S] cluster scaffold protein] + N(6)-[(R)-dihydrolipoyl]-L-lysyl-[protein] + 4 Fe(3+) + 2 hydrogen sulfide + 2 5'-deoxyadenosine + 2 L-methionine + 2 reduced [2Fe-2S]-[ferredoxin]. It functions in the pathway protein modification; protein lipoylation via endogenous pathway; protein N(6)-(lipoyl)lysine from octanoyl-[acyl-carrier-protein]: step 2/2. Catalyzes the radical-mediated insertion of two sulfur atoms into the C-6 and C-8 positions of the octanoyl moiety bound to the lipoyl domains of lipoate-dependent enzymes, thereby converting the octanoylated domains into lipoylated derivatives. In Bos taurus (Bovine), this protein is Lipoyl synthase, mitochondrial.